The following is a 211-amino-acid chain: Uracil phosphoribosyltransferase (211 aa).

5-phospho-alpha-D-ribose 1-diphosphate-binding positions include Arg78, Arg103, and 130–138 (DPMLATGGT). Residues Ile195 and 200–202 (GDA) contribute to the uracil site. 5-phospho-alpha-D-ribose 1-diphosphate is bound at residue Asp201.

Belongs to the UPRTase family. It depends on Mg(2+) as a cofactor.

It carries out the reaction UMP + diphosphate = 5-phospho-alpha-D-ribose 1-diphosphate + uracil. It participates in pyrimidine metabolism; UMP biosynthesis via salvage pathway; UMP from uracil: step 1/1. Allosterically activated by GTP. In terms of biological role, catalyzes the conversion of uracil and 5-phospho-alpha-D-ribose 1-diphosphate (PRPP) to UMP and diphosphate. This is Uracil phosphoribosyltransferase from Streptomyces griseus subsp. griseus (strain JCM 4626 / CBS 651.72 / NBRC 13350 / KCC S-0626 / ISP 5235).